The primary structure comprises 101 residues: Small ribosomal subunit protein uS14 (101 aa).

It belongs to the universal ribosomal protein uS14 family. As to quaternary structure, part of the 30S ribosomal subunit. Contacts proteins S3 and S10.

Its function is as follows. Binds 16S rRNA, required for the assembly of 30S particles and may also be responsible for determining the conformation of the 16S rRNA at the A site. This Protochlamydia amoebophila (strain UWE25) protein is Small ribosomal subunit protein uS14.